Here is a 532-residue protein sequence, read N- to C-terminus: Glutamate--cysteine ligase (532 aa).

Belongs to the glutamate--cysteine ligase type 1 family. Type 1 subfamily.

It catalyses the reaction L-cysteine + L-glutamate + ATP = gamma-L-glutamyl-L-cysteine + ADP + phosphate + H(+). The protein operates within sulfur metabolism; glutathione biosynthesis; glutathione from L-cysteine and L-glutamate: step 1/2. The protein is Glutamate--cysteine ligase of Pseudomonas fluorescens (strain Pf0-1).